Here is a 292-residue protein sequence, read N- to C-terminus: MSPDLKKLKELRERTNSGLLDCKNALEATDNDIEKAIKWLQENGIIKAAKKSARIAAEGITKAYIKDNVAVLFELNAETDFVARNQLFIDLANKIQDALAANDFSDIEAANKVKIDGMTIEESCQDLTAKIGEKITLRRAEKFVAKPGEVVAGYTHANSRVADIAIAKGANQEALRHVTMHIAALNPSHLFESCLPKAQHDEIVNRINSDPKLANKPEKIQESMKAGMLKKEFNELGVLMFQPFVMEDSKTVAKYLEENQLTLLDATRYEVGEGIEKKVVDFAAEVAEQMKQ.

The segment at 79-82 (TDFV) is involved in Mg(2+) ion dislocation from EF-Tu.

This sequence belongs to the EF-Ts family.

It localises to the cytoplasm. Associates with the EF-Tu.GDP complex and induces the exchange of GDP to GTP. It remains bound to the aminoacyl-tRNA.EF-Tu.GTP complex up to the GTP hydrolysis stage on the ribosome. The chain is Elongation factor Ts from Metamycoplasma arthritidis (strain 158L3-1) (Mycoplasma arthritidis).